The sequence spans 651 residues: Sodium/potassium/calcium exchanger 2 (651 aa).

At 1–38 the chain is on the cytoplasmic side; sequence MALCKKTVGSVLEEWCLNEPLFGCKRHQNVRKKLRLIR. The helical transmembrane segment at 39–59 threads the bilayer; it reads IIGLLVSVVAISTFSLSISAF. The Extracellular segment spans residues 60–134; the sequence is FKMETHSTVL…DLFSLEERRK (75 aa). Residues 92–123 are disordered; the sequence is QNEGSTPDSPTSMKHEAEHDNATEEHSKGEYP. Residues 93–103 show a composition bias toward polar residues; that stretch reads NEGSTPDSPTS. Over residues 104–122 the composition is skewed to basic and acidic residues; it reads MKHEAEHDNATEEHSKGEY. N-linked (GlcNAc...) asparagine glycosylation is present at N112. The chain crosses the membrane as a helical span at residues 135-155; that stretch reads GAVILHVIGMIYMFIALAIVC. The Cytoplasmic portion of the chain corresponds to 156–179; sequence DEFFVPSLTVITEKLSISDDVAGA. One copy of the Alpha-1 repeat lies at 176–216; that stretch reads VAGATFMAAGGSAPELFTSLIGVFISHSNVGIGTIVGSAVF. Residues 180-200 form a helical membrane-spanning segment; it reads TFMAAGGSAPELFTSLIGVFI. Over 201–206 the chain is Extracellular; sequence SHSNVG. A helical transmembrane segment spans residues 207-227; the sequence is IGTIVGSAVFNILFVIGMCAL. At 228 to 245 the chain is on the cytoplasmic side; that stretch reads FSREILNLTWWPLFRDVS. A helical membrane pass occupies residues 246-266; the sequence is FYIVDLILLIIFFLDNLIMWW. Residues 267–459 are Extracellular-facing; that stretch reads ESLTLLTAYF…SLAWPDTPRK (193 aa). Over residues 304-322 the composition is skewed to basic and acidic residues; it reads ATTGDAEGKSPTAGDKDDQ. The interval 304-338 is disordered; sequence ATTGDAEGKSPTAGDKDDQTLTTKPRLQRGGSSAS. The segment covering 323 to 338 has biased composition (polar residues); the sequence is TLTTKPRLQRGGSSAS. A helical membrane pass occupies residues 460-480; that stretch reads QLTYLLVLPIVFPLWVSLPDV. The Cytoplasmic portion of the chain corresponds to 481-487; sequence RNPRSRK. A helical membrane pass occupies residues 488–508; the sequence is FFPITFFGSISWIAFFSYLMV. The Extracellular portion of the chain corresponds to 509–523; the sequence is WWAHQVGETIGISEE. Residues 524 to 544 traverse the membrane as a helical segment; it reads IMGLTILAAGTSIPDLITSVI. One copy of the Alpha-2 repeat lies at 531–562; the sequence is AAGTSIPDLITSVIVARKGLGDMAVSSSVGSN. Residues 545 to 562 lie on the Cytoplasmic side of the membrane; sequence VARKGLGDMAVSSSVGSN. A helical transmembrane segment spans residues 563 to 583; it reads IFDITVGLPLPWLLYAVINNF. Residues 584–592 are Extracellular-facing; the sequence is SPVTVSSNG. A helical transmembrane segment spans residues 593–613; that stretch reads LFCAIVLLFIMLLFVILSIAF. Residues 614-620 lie on the Cytoplasmic side of the membrane; that stretch reads CKWRMNK. A helical membrane pass occupies residues 621–641; that stretch reads FLGFLMFGLYFVFLIVSVLLE. Over 642 to 651 the chain is Extracellular; sequence DKVIQCPVSI.

The protein belongs to the Ca(2+):cation antiporter (CaCA) (TC 2.A.19) family. SLC24A subfamily. Retinal cones. Found in the cone inner segment layer and in a subpopulation of ganglion cells.

The protein localises to the cell membrane. It carries out the reaction Ca(2+)(out) + K(+)(out) + 4 Na(+)(in) = Ca(2+)(in) + K(+)(in) + 4 Na(+)(out). Its function is as follows. Calcium, potassium:sodium antiporter that transports 1 Ca(2+) and 1 K(+) in exchange for 4 Na(+). Required for learming and memory by regulating neuronal Ca(2+), which is essential for the development of synaptic plasticity. The chain is Sodium/potassium/calcium exchanger 2 (SLC24A2) from Gallus gallus (Chicken).